A 257-amino-acid chain; its full sequence is Imidazole glycerol phosphate synthase subunit HisF (257 aa).

Active-site residues include D12 and D131.

This sequence belongs to the HisA/HisF family. In terms of assembly, heterodimer of HisH and HisF.

It localises to the cytoplasm. The enzyme catalyses 5-[(5-phospho-1-deoxy-D-ribulos-1-ylimino)methylamino]-1-(5-phospho-beta-D-ribosyl)imidazole-4-carboxamide + L-glutamine = D-erythro-1-(imidazol-4-yl)glycerol 3-phosphate + 5-amino-1-(5-phospho-beta-D-ribosyl)imidazole-4-carboxamide + L-glutamate + H(+). Its pathway is amino-acid biosynthesis; L-histidine biosynthesis; L-histidine from 5-phospho-alpha-D-ribose 1-diphosphate: step 5/9. Functionally, IGPS catalyzes the conversion of PRFAR and glutamine to IGP, AICAR and glutamate. The HisF subunit catalyzes the cyclization activity that produces IGP and AICAR from PRFAR using the ammonia provided by the HisH subunit. This chain is Imidazole glycerol phosphate synthase subunit HisF, found in Burkholderia pseudomallei (strain 1106a).